Here is a 305-residue protein sequence, read N- to C-terminus: Suppressor of activated egl-4 protein 2 (305 aa).

Residues 138 to 168 form a disordered region; it reads KRGYESDSSDVSGVSHCSDAKRRRGRPRKDE. Positions 158–170 form a DNA-binding region, a.T hook; that stretch reads KRRRGRPRKDEEA.

As to quaternary structure, interacts with phosphorylated egl-4. May interact with itself. May be a component of a histone deacetylase complex containing saeg-2, saeg-1 and hda-2. As to expression, ubiquitously expressed.

The protein localises to the nucleus. In terms of biological role, as a likely component of a histone deacetylase complex, together with saeg-1 and hda-2, functions downstream of the cAMP-dependent kinase egl-4 to regulate the expression of genes required for egg-laying and foraging. This Caenorhabditis elegans protein is Suppressor of activated egl-4 protein 2.